A 362-amino-acid chain; its full sequence is Glutaminase-asparaginase (362 aa).

Positions 1–25 (MKPLLHAFAPGVMALMLLLPQAAQA) are cleaved as a signal peptide. The Asparaginase/glutaminase domain maps to 35–362 (SNVVILATGG…KELQRIFWEY (328 aa)). Catalysis depends on Thr45, which acts as the Acyl-ester intermediate. Substrate-binding positions include Ser92 and 125 to 126 (TD).

Belongs to the asparaginase 1 family. As to quaternary structure, homotetramer.

It localises to the periplasm. The enzyme catalyses L-glutamine + H2O = L-glutamate + NH4(+). It carries out the reaction L-asparagine + H2O = L-aspartate + NH4(+). The polypeptide is Glutaminase-asparaginase (ansB) (Pseudomonas aeruginosa (strain ATCC 15692 / DSM 22644 / CIP 104116 / JCM 14847 / LMG 12228 / 1C / PRS 101 / PAO1)).